The primary structure comprises 515 residues: Bifunctional solanapyrone synthase (515 aa).

A signal peptide spans 1–25 (MRLIILNLLSLGITPSVVGHSGPHR). N66 carries N-linked (GlcNAc...) asparagine glycosylation. The FAD-binding PCMH-type domain maps to 91–261 (APKNPACIYT…THIVQRTYPL (171 aa)). H128 is subject to Pros-8alpha-FAD histidine. N-linked (GlcNAc...) asparagine glycosylation is found at N274 and N355.

It belongs to the oxygen-dependent FAD-linked oxidoreductase family. Requires FAD as cofactor.

It carries out the reaction prosolanapyrone II + O2 = prosolanapyrone III + H2O2. The catalysed reaction is prosolanapyrone III = (-)-solanapyrone A. The enzyme catalyses prosolanapyrone III = solanapyrone D. It functions in the pathway phytotoxin biosynthesis. Bifunctional solanapyrone synthase; part of the gene cluster that mediates the biosynthesis of the phytotoxin solanapyrone, a causal agent of early blight disease of potato and tomato. The prosolanapyrone synthase sol1 is a polyketide synthase that produces the octaketide desmethylprosolanapyrone I via sequential condensations of 7 malonyl-CoA units with one acetyl-CoA unit, and one methylation step. The octaketide backbone is further methylated by the sol2 O-methyltransferase to yield prosolanapyrone I. Prosolanapyrone I is hydroxylated to prosolanapyrone II by the cytochrome P450 monooxygenase sol6. The solanapyrone synthase sol5 then catalyzes the oxidation of prosolanapyrone II and the subsequent Diels Alder cycloisomerization of the product prosolanapyrone III to solanapyrones A and D. Solanapyrones A and D are then converted into solanapyrones B and E, respectively, by the sol3 dehydrogenase. This chain is Bifunctional solanapyrone synthase (sol5), found in Alternaria solani.